An 86-amino-acid polypeptide reads, in one-letter code: Exodeoxyribonuclease 7 small subunit (86 aa).

Belongs to the XseB family. Heterooligomer composed of large and small subunits.

It localises to the cytoplasm. The catalysed reaction is Exonucleolytic cleavage in either 5'- to 3'- or 3'- to 5'-direction to yield nucleoside 5'-phosphates.. Its function is as follows. Bidirectionally degrades single-stranded DNA into large acid-insoluble oligonucleotides, which are then degraded further into small acid-soluble oligonucleotides. The protein is Exodeoxyribonuclease 7 small subunit of Xanthomonas axonopodis pv. citri (strain 306).